We begin with the raw amino-acid sequence, 478 residues long: UDP-N-acetylmuramate--L-alanine ligase (478 aa).

122–128 (GTHGKTT) contacts ATP.

This sequence belongs to the MurCDEF family.

Its subcellular location is the cytoplasm. The catalysed reaction is UDP-N-acetyl-alpha-D-muramate + L-alanine + ATP = UDP-N-acetyl-alpha-D-muramoyl-L-alanine + ADP + phosphate + H(+). Its pathway is cell wall biogenesis; peptidoglycan biosynthesis. Its function is as follows. Cell wall formation. The chain is UDP-N-acetylmuramate--L-alanine ligase from Stenotrophomonas maltophilia (strain K279a).